The primary structure comprises 512 residues: ATP synthase subunit alpha (512 aa).

169–176 (GDRQTGKT) is a binding site for ATP.

The protein belongs to the ATPase alpha/beta chains family. In terms of assembly, F-type ATPases have 2 components, CF(1) - the catalytic core - and CF(0) - the membrane proton channel. CF(1) has five subunits: alpha(3), beta(3), gamma(1), delta(1), epsilon(1). CF(0) has three main subunits: a(1), b(2) and c(9-12). The alpha and beta chains form an alternating ring which encloses part of the gamma chain. CF(1) is attached to CF(0) by a central stalk formed by the gamma and epsilon chains, while a peripheral stalk is formed by the delta and b chains.

The protein resides in the cell inner membrane. The enzyme catalyses ATP + H2O + 4 H(+)(in) = ADP + phosphate + 5 H(+)(out). Functionally, produces ATP from ADP in the presence of a proton gradient across the membrane. The alpha chain is a regulatory subunit. The protein is ATP synthase subunit alpha of Azoarcus sp. (strain BH72).